A 182-amino-acid chain; its full sequence is ATP-dependent protease subunit HslV (182 aa).

Residue Thr-7 is part of the active site. Na(+) is bound by residues Ala-166, Cys-169, and Thr-172.

Belongs to the peptidase T1B family. HslV subfamily. As to quaternary structure, a double ring-shaped homohexamer of HslV is capped on each side by a ring-shaped HslU homohexamer. The assembly of the HslU/HslV complex is dependent on binding of ATP.

Its subcellular location is the cytoplasm. The catalysed reaction is ATP-dependent cleavage of peptide bonds with broad specificity.. With respect to regulation, allosterically activated by HslU binding. Protease subunit of a proteasome-like degradation complex believed to be a general protein degrading machinery. This chain is ATP-dependent protease subunit HslV, found in Albidiferax ferrireducens (strain ATCC BAA-621 / DSM 15236 / T118) (Rhodoferax ferrireducens).